We begin with the raw amino-acid sequence, 881 residues long: Glutamate--tRNA ligase (881 aa).

The tract at residues 1-480 is glutamyl-tRNA synthetase; sequence MSVRVRLAPS…ILRFKKSIGQ (480 aa). Positions 9–19 match the 'HIGH' region motif; the sequence is PSPTGNLHIGT. The 'KMSKS' region motif lies at 248 to 252; the sequence is KLSKR. K251 is a binding site for ATP. A unknown region spans residues 481 to 881; it reads EIEDTKIEDT…IKREIFGKPS (401 aa). Residues 488 to 502 are compositionally biased toward basic and acidic residues; the sequence is EDTKKAETTPHKSKG. Residues 488–747 form a disordered region; the sequence is EDTKKAETTP…PTATDAETRE (260 aa). The span at 522-548 shows a compositional bias: low complexity; the sequence is QTQTTKPPKKGQTATPVATTPTATDVT. A compositionally biased stretch (polar residues) spans 549 to 562; the sequence is ENTSVGTQETQSQI. The segment covering 563–576 has biased composition (low complexity); sequence TTPVATTPTATDVT. Polar residues predominate over residues 577 to 590; it reads ENTSVGTQETQSQI. Positions 591 to 604 are enriched in low complexity; it reads TTPVATTPTATDVT. Residues 605 to 618 are compositionally biased toward polar residues; the sequence is ENTSVETQETQSQI. Residues 619-632 show a composition bias toward low complexity; it reads TTPVATTPTATDVT. Residues 633–646 are compositionally biased toward polar residues; sequence ENTSVETQETQSQI. Positions 647–660 are enriched in low complexity; that stretch reads TTPVATTPTATDVT. Residues 661 to 674 are compositionally biased toward polar residues; it reads ENTSVGTQETQSQI. A compositionally biased stretch (low complexity) spans 675–688; sequence TTPVATTPTATDVT. Residues 689 to 702 show a composition bias toward polar residues; it reads ENTSVETQETQSQI. Residues 703 to 720 are compositionally biased toward low complexity; sequence TTPVATTSTATDVTENTS. A compositionally biased stretch (polar residues) spans 721–730; it reads VETQETQSQI. Over residues 731-742 the composition is skewed to low complexity; that stretch reads TTPVATTPTATD. 2 helical membrane passes run 809–829 and 832–852; these read LFGW…VIEA and GIPI…VWFV.

The protein belongs to the class-I aminoacyl-tRNA synthetase family. Glutamate--tRNA ligase type 1 subfamily. Monomer.

The protein localises to the cytoplasm. Its subcellular location is the cell membrane. It catalyses the reaction tRNA(Glu) + L-glutamate + ATP = L-glutamyl-tRNA(Glu) + AMP + diphosphate. Catalyzes the attachment of glutamate to tRNA(Glu) in a two-step reaction: glutamate is first activated by ATP to form Glu-AMP and then transferred to the acceptor end of tRNA(Glu). The sequence is that of Glutamate--tRNA ligase (gltX) from Trichodesmium erythraeum (strain IMS101).